Here is a 773-residue protein sequence, read N- to C-terminus: DEAD-box ATP-dependent RNA helicase 32 (773 aa).

Positions 28-71 (IDAGKPARGTRPPPLSKSSSSPADTAAAKRGAKGAGGVPSKAAG) are disordered. The span at 43–56 (SKSSSSPADTAAAK) shows a compositional bias: low complexity. The short motif at 80–108 (ARFDELPLSNKTKDGLRKAGYTEMSEIQR) is the Q motif element. The Helicase ATP-binding domain occupies 111–287 (LPHALCGRDV…RVSLKDPEYI (177 aa)). 124-131 (AKTGSGKT) is an ATP binding site. Residues 235-238 (DEAD) carry the DEAD box motif. One can recognise a Helicase C-terminal domain in the interval 309 to 462 (PLEQKLNMLW…IKKPNTEQLQ (154 aa)). Positions 664–715 (DKDKISQRYAEMLREMQEHDKEDKLEHKRILREKKLQKKLKLKRKRNEEMDA) form a coiled coil. Basic residues predominate over residues 699–708 (LQKKLKLKRK). Residues 699–755 (LQKKLKLKRKRNEEMDAGSENSGSESDRDQRTASKGKKRYFNSDDEEGSKDAAKDGD) are disordered.

The protein belongs to the DEAD box helicase family. DDX10/DBP4 subfamily.

The catalysed reaction is ATP + H2O = ADP + phosphate + H(+). This Oryza sativa subsp. japonica (Rice) protein is DEAD-box ATP-dependent RNA helicase 32.